A 447-amino-acid chain; its full sequence is Methylenetetrahydrofolate--tRNA-(uracil-5-)-methyltransferase TrmFO (447 aa).

10–15 (GAGLAG) contacts FAD.

The protein belongs to the MnmG family. TrmFO subfamily. Requires FAD as cofactor.

Its subcellular location is the cytoplasm. The enzyme catalyses uridine(54) in tRNA + (6R)-5,10-methylene-5,6,7,8-tetrahydrofolate + NADH + H(+) = 5-methyluridine(54) in tRNA + (6S)-5,6,7,8-tetrahydrofolate + NAD(+). The catalysed reaction is uridine(54) in tRNA + (6R)-5,10-methylene-5,6,7,8-tetrahydrofolate + NADPH + H(+) = 5-methyluridine(54) in tRNA + (6S)-5,6,7,8-tetrahydrofolate + NADP(+). In terms of biological role, catalyzes the folate-dependent formation of 5-methyl-uridine at position 54 (M-5-U54) in all tRNAs. This chain is Methylenetetrahydrofolate--tRNA-(uracil-5-)-methyltransferase TrmFO, found in Symbiobacterium thermophilum (strain DSM 24528 / JCM 14929 / IAM 14863 / T).